The sequence spans 133 residues: Putative nickel-responsive regulator (133 aa).

4 residues coordinate Ni(2+): His-74, His-85, His-87, and Cys-93.

This sequence belongs to the transcriptional regulatory CopG/NikR family. The cofactor is Ni(2+).

In terms of biological role, transcriptional regulator. The polypeptide is Putative nickel-responsive regulator (Saccharolobus solfataricus (strain ATCC 35092 / DSM 1617 / JCM 11322 / P2) (Sulfolobus solfataricus)).